Reading from the N-terminus, the 467-residue chain is ATP-dependent protease ATPase subunit HslU (467 aa).

Residues V22 and 64 to 69 each bind ATP; that span reads GVGKTE. Positions 146-185 are disordered; the sequence is KASNNSNPLESLLGGAIPNFGNNDDEEEETPTEEIKTKRS. Residues 168-177 are compositionally biased toward acidic residues; the sequence is NDDEEEETPT. ATP is bound by residues D280, E345, and R417.

This sequence belongs to the ClpX chaperone family. HslU subfamily. A double ring-shaped homohexamer of HslV is capped on each side by a ring-shaped HslU homohexamer. The assembly of the HslU/HslV complex is dependent on binding of ATP.

The protein resides in the cytoplasm. In terms of biological role, ATPase subunit of a proteasome-like degradation complex; this subunit has chaperone activity. The binding of ATP and its subsequent hydrolysis by HslU are essential for unfolding of protein substrates subsequently hydrolyzed by HslV. HslU recognizes the N-terminal part of its protein substrates and unfolds these before they are guided to HslV for hydrolysis. In Staphylococcus haemolyticus (strain JCSC1435), this protein is ATP-dependent protease ATPase subunit HslU.